Reading from the N-terminus, the 372-residue chain is Ephrin type-A receptor 8 (372 aa).

Positions 2–263 constitute a Protein kinase domain; sequence IHIEKIIGSG…HVVSVLEALV (262 aa). ATP-binding positions include 8–16 and lysine 34; that span reads IGSGESGEV. Catalysis depends on aspartate 127, which acts as the Proton acceptor. Position 206 is a phosphotyrosine; by autocatalysis (tyrosine 206). In terms of domain architecture, SAM spans 297–372; sequence NGDLTVGDWL…SCTQGPRRHL (76 aa). Residues 370–372 carry the PDZ-binding motif; that stretch reads RHL.

As to quaternary structure, heterotetramer upon binding of the ligand. The heterotetramer is composed of an ephrin dimer and a receptor dimer. Oligomerization is probably required to induce biological responses. May also form heterodimers with other ephrin receptors. Interacts with FYN; possible downstream effector of EPHA8 in regulation of cell adhesion. Interacts with PIK3CG; regulates integrin-mediated cell adhesion to substrate. Interacts with TIAM1; regulates clathrin-mediated endocytosis of EPHA8. Interacts with ANKS1A and ANKS1B; EPHA8 kinase activity-independent but stimulated by EPHA8 ubiquitination. Post-translationally, phosphorylated. Phosphorylation is stimulated upon binding of its ligands including EFNA2, EFNA3 and EFNA5. Autophosphorylation on Tyr-206 modulates tyrosine kinase activity. Ubiquitinated. Ubiquitination by CBL regulates the receptor stability and activity through proteasomal degradation. ANKS1A prevents ubiquitination and degradation. In terms of tissue distribution, most abundant in brain.

The protein resides in the cell membrane. The protein localises to the cell projection. It localises to the early endosome membrane. It carries out the reaction L-tyrosyl-[protein] + ATP = O-phospho-L-tyrosyl-[protein] + ADP + H(+). Receptor tyrosine kinase which binds promiscuously GPI-anchored ephrin-A family ligands residing on adjacent cells, leading to contact-dependent bidirectional signaling into neighboring cells. The signaling pathway downstream of the receptor is referred to as forward signaling while the signaling pathway downstream of the ephrin ligand is referred to as reverse signaling. The GPI-anchored ephrin-A EFNA2, EFNA3, and EFNA5 are able to activate EPHA8 through phosphorylation. With EFNA5 may regulate integrin-mediated cell adhesion and migration on fibronectin substrate but also neurite outgrowth. During development of the nervous system also plays a role in axon guidance. Downstream effectors of the EPHA8 signaling pathway include FYN which promotes cell adhesion upon activation by EPHA8 and the MAP kinases in the stimulation of neurite outgrowth. This chain is Ephrin type-A receptor 8 (Epha8), found in Rattus norvegicus (Rat).